The following is a 460-amino-acid chain: uncharacterized protein (460 aa).

The 59-residue stretch at 5-63 folds into the TRAM domain; that stretch reads TWHQGELIEVAIADLSDTGDGVGRFAERVVFVPDTVPGDRVLVRLLHVKPNYAHGKLHQ. [4Fe-4S] cluster-binding residues include C76, C82, C85, and C164. Residues Q288, Y317, E338, and D383 each coordinate S-adenosyl-L-methionine. C410 functions as the Nucleophile in the catalytic mechanism.

The protein belongs to the class I-like SAM-binding methyltransferase superfamily. RNA M5U methyltransferase family.

This is an uncharacterized protein from Nostoc sp. (strain PCC 7120 / SAG 25.82 / UTEX 2576).